The following is a 320-amino-acid chain: MPTGDFDSKPSWADQVEEEGEDDKCVTSELLKGIPLPTGDTSPEPELLPGDPLPPPKEVINGNIKTVTEYKIEEDGKKFKIVRTFRIETRKASKAVARRKNWKKFGNSEFDPPGPNVATTTVSDDVSMTFITSKEDLNCQEEEDPMNKLKGQKIVSCRICKGDHWTTRCPYKDTLGPMQKELAEQLGLSTGEKEKLPGELEPVQAAQSKTGKYVPPSLRDGASRRGESMQPNRRADDNATIRVTNLSEDTRETDLQELFRPFGSISRIYLAKDKTTGQSKGFAFISFHRREDAARAIAGVSGFGYDHLILNVEWAKPSTN.

Positions 1–60 (MPTGDFDSKPSWADQVEEEGEDDKCVTSELLKGIPLPTGDTSPEPELLPGDPLPPPKEVI) are disordered. Phosphoserine is present on residues Ser8 and Ser11. Phosphothreonine occurs at positions 38 and 41. Residues Ser42, Ser189, Ser223, and Ser264 each carry the phosphoserine modification. Residues 204 to 233 (QAAQSKTGKYVPPSLRDGASRRGESMQPNR) are disordered. Positions 221-233 (GASRRGESMQPNR) are enriched in basic and acidic residues. Positions 239–317 (ATIRVTNLSE…LILNVEWAKP (79 aa)) constitute an RRM domain.

It belongs to the eIF-3 subunit G family. As to quaternary structure, component of the eukaryotic translation initiation factor 3 (eIF-3) complex, which is composed of 13 subunits: EIF3A, EIF3B, EIF3C, EIF3D, EIF3E, EIF3F, EIF3G, EIF3H, EIF3I, EIF3J, EIF3K, EIF3L and EIF3M. The eIF-3 complex appears to include 3 stable modules: module A is composed of EIF3A, EIF3B, EIF3G and EIF3I; module B is composed of EIF3F, EIF3H, and EIF3M; and module C is composed of EIF3C, EIF3D, EIF3E, EIF3K and EIF3L. EIF3C of module C binds EIF3B of module A and EIF3H of module B, thereby linking the three modules. EIF3J is a labile subunit that binds to the eIF-3 complex via EIF3B. The eIF-3 complex may interact with RPS6KB1 under conditions of nutrient depletion. Mitogenic stimulation may lead to binding and activation of a complex composed of MTOR and RPTOR, leading to phosphorylation and release of RPS6KB1 and binding of EIF4B to eIF-3. Interacts (via C-terminus) with AIFM1 (via N-terminus). Interacts with DHX33; the interaction is independent of RNA. Post-translationally, phosphorylated. Phosphorylation is enhanced upon serum stimulation.

The protein localises to the cytoplasm. The protein resides in the nucleus. It is found in the perinuclear region. Its function is as follows. RNA-binding component of the eukaryotic translation initiation factor 3 (eIF-3) complex, which is required for several steps in the initiation of protein synthesis. The eIF-3 complex associates with the 40S ribosome and facilitates the recruitment of eIF-1, eIF-1A, eIF-2:GTP:methionyl-tRNAi and eIF-5 to form the 43S pre-initiation complex (43S PIC). The eIF-3 complex stimulates mRNA recruitment to the 43S PIC and scanning of the mRNA for AUG recognition. The eIF-3 complex is also required for disassembly and recycling of post-termination ribosomal complexes and subsequently prevents premature joining of the 40S and 60S ribosomal subunits prior to initiation. The eIF-3 complex specifically targets and initiates translation of a subset of mRNAs involved in cell proliferation, including cell cycling, differentiation and apoptosis, and uses different modes of RNA stem-loop binding to exert either translational activation or repression. This subunit can bind 18S rRNA. The chain is Eukaryotic translation initiation factor 3 subunit G (Eif3g) from Mus musculus (Mouse).